We begin with the raw amino-acid sequence, 700 residues long: Protein UL29/28 (700 aa).

The tract at residues M1 to A30 is disordered. Over residues S9–P21 the composition is skewed to low complexity.

This sequence belongs to the herpesviridae US22 family. As to quaternary structure, interacts with UL38 and host HDAC1; these interactions are necessary for the HDAC1 interaction with UL38. Interacts with host MTA2.

The protein localises to the virion. It is found in the host nucleus. The protein resides in the host cytoplasm. Its function is as follows. Contributes to activation of immediate-early gene expression. The protein is Protein UL29/28 (UL29) of Human cytomegalovirus (strain Merlin) (HHV-5).